We begin with the raw amino-acid sequence, 226 residues long: PKHD-type hydroxylase PiuC (226 aa).

One can recognise a Fe2OG dioxygenase domain in the interval K78 to S178. Positions 96, 98, and 159 each coordinate Fe cation. R169 serves as a coordination point for 2-oxoglutarate.

Fe(2+) is required as a cofactor. The cofactor is L-ascorbate.

The sequence is that of PKHD-type hydroxylase PiuC (piuC) from Pseudomonas aeruginosa (strain ATCC 15692 / DSM 22644 / CIP 104116 / JCM 14847 / LMG 12228 / 1C / PRS 101 / PAO1).